Here is a 192-residue protein sequence, read N- to C-terminus: Rhomboid protease GlpG (192 aa).

Residues 1–10 (MKNFLAQQGK) lie on the Cytoplasmic side of the membrane. A helical transmembrane segment spans residues 11–31 (ITLILTALCVLIYLAQQLGFE). Residues 32–57 (DDIMYLMHYPAYEEQDSEVWRYISHT) lie on the Periplasmic side of the membrane. A helical transmembrane segment spans residues 58–78 (LVHLSNLHILFNLSWFFIFGG). The Cytoplasmic portion of the chain corresponds to 79–82 (MIER). The helical transmembrane segment at 83-103 (TFGSVKLLMLYVVASAITGYV) threads the bilayer. Residues 104–107 (QNYV) lie on the Periplasmic side of the membrane. The helical transmembrane segment at 108-128 (SGPAFFGLSGVVYAVLGYVFI) threads the bilayer. Ser-116 functions as the Nucleophile in the catalytic mechanism. Over 129–141 (RDKLNHHLFDLPE) the chain is Cytoplasmic. A helical membrane pass occupies residues 142–162 (GFFTMLLVGIALGFISPLFGV). A topological domain (periplasmic) is located at residue Glu-163. Residues 164-184 (MGNAAHISGLIVGLIWGFIDS) traverse the membrane as a helical segment. The active site involves His-169. Topologically, residues 185-192 (KLRKNSLE) are cytoplasmic.

It belongs to the peptidase S54 family.

It localises to the cell inner membrane. It catalyses the reaction Cleaves type-1 transmembrane domains using a catalytic dyad composed of serine and histidine that are contributed by different transmembrane domains.. Its function is as follows. Rhomboid-type serine protease that catalyzes intramembrane proteolysis. This chain is Rhomboid protease GlpG (glpG), found in Haemophilus influenzae (strain ATCC 51907 / DSM 11121 / KW20 / Rd).